Consider the following 29-residue polypeptide: Vodo peptide N (29 aa).

The segment at residues 1–29 is a cross-link (cyclopeptide (Gly-Asn)); that stretch reads GLPVCGETCTLGKCYTAGCSCSWPVCYRN. Cystine bridges form between Cys-5/Cys-19, Cys-9/Cys-21, and Cys-14/Cys-26.

In terms of processing, this is a cyclic peptide.

Probably participates in a plant defense mechanism. This Viola odorata (Sweet violet) protein is Vodo peptide N.